A 220-amino-acid polypeptide reads, in one-letter code: Charged multivesicular body protein 2a (220 aa).

At Met1 the chain carries N-acetylmethionine. Coiled-coil stretches lie at residues 12–52 (EELL…KMAK) and 195–220 (RAAE…LRRD). The MIT-interacting motif signature appears at 208–218 (ADLEERLKNLR).

Belongs to the SNF7 family. In terms of assembly, probable core component of the endosomal sorting required for transport complex III (ESCRT-III). ESCRT-III components are thought to multimerize to form a flat lattice on the perimeter membrane of the endosome.

It is found in the late endosome membrane. The protein localises to the cytoplasm. In terms of biological role, probable core component of the endosomal sorting required for transport complex III (ESCRT-III) which is involved in multivesicular bodies (MVBs) formation and sorting of endosomal cargo proteins into MVBs. MVBs contain intraluminal vesicles (ILVs) that are generated by invagination and scission from the limiting membrane of the endosome and mostly are delivered to lysosomes enabling degradation of membrane proteins, such as stimulated growth factor receptors, lysosomal enzymes and lipids. This is Charged multivesicular body protein 2a (CHMP2A) from Gallus gallus (Chicken).